A 109-amino-acid chain; its full sequence is uncharacterized protein (109 aa).

Helical transmembrane passes span 24–44 (SLGILMGGSTSCMVGMNSAFV) and 68–88 (VIVLFNTLVFRSPLFLFSIFI).

Its subcellular location is the membrane. This is an uncharacterized protein from Saccharomyces cerevisiae (strain ATCC 204508 / S288c) (Baker's yeast).